A 562-amino-acid polypeptide reads, in one-letter code: Efflux pump apf11 (562 aa).

Low complexity-rich tracts occupy residues Met1–Ala10 and Thr18–Thr30. Positions Met1 to Pro36 are disordered. Asn22 carries N-linked (GlcNAc...) asparagine glycosylation. 8 consecutive transmembrane segments (helical) span residues Leu46–Ala66, Ala83–Ile103, Lys110–Ala130, Ala141–Thr161, Val169–Gly189, Trp200–Leu220, Gly249–Thr269, and Ile278–Trp298. A glycan (N-linked (GlcNAc...) asparagine) is linked at Asn312. 6 helical membrane passes run Met317–Pro337, Leu356–Val376, Phe382–Ile404, Ile414–Ala434, Val447–Leu467, and Phe516–Ile536.

The protein belongs to the major facilitator superfamily. TCR/Tet family.

The protein resides in the membrane. The protein operates within secondary metabolite biosynthesis. Functionally, efflux pump; part of the gene cluster that mediates the biosynthesis of the cyclic tetrapeptide apicidin F (APF). This Gibberella fujikuroi (strain CBS 195.34 / IMI 58289 / NRRL A-6831) (Bakanae and foot rot disease fungus) protein is Efflux pump apf11 (apf11).